The following is a 141-amino-acid chain: Nucleoside diphosphate kinase (141 aa).

6 residues coordinate ATP: Lys11, Phe59, Arg87, Thr93, Arg104, and Asn114. His117 functions as the Pros-phosphohistidine intermediate in the catalytic mechanism.

This sequence belongs to the NDK family. In terms of assembly, homotetramer. The cofactor is Mg(2+).

It localises to the cytoplasm. It catalyses the reaction a 2'-deoxyribonucleoside 5'-diphosphate + ATP = a 2'-deoxyribonucleoside 5'-triphosphate + ADP. It carries out the reaction a ribonucleoside 5'-diphosphate + ATP = a ribonucleoside 5'-triphosphate + ADP. In terms of biological role, major role in the synthesis of nucleoside triphosphates other than ATP. The ATP gamma phosphate is transferred to the NDP beta phosphate via a ping-pong mechanism, using a phosphorylated active-site intermediate. In Legionella pneumophila (strain Paris), this protein is Nucleoside diphosphate kinase.